A 242-amino-acid polypeptide reads, in one-letter code: Venom nerve growth factor 2 (242 aa).

An N-terminal signal peptide occupies residues 1-18; that stretch reads MSMLCYTLIIAFLIGIWA. The propeptide occupies 19–125; that stretch reads APKSEDNVPL…ALNRNIRSKR (107 aa). Positions 46 to 69 are disordered; that stretch reads KALKTSRNTDQRHPAPKKAEDQEL. The segment covering 52 to 66 has biased composition (basic and acidic residues); that stretch reads RNTDQRHPAPKKAED. Intrachain disulfides connect C139-C203, C181-C231, and C191-C233. N-linked (GlcNAc...) asparagine glycosylation occurs at N147.

Belongs to the NGF-beta family. In terms of assembly, homodimer; non-covalently linked. In terms of tissue distribution, expressed by the venom gland.

It localises to the secreted. Nerve growth factor is important for the development and maintenance of the sympathetic and sensory nervous systems. It stimulates division and differentiation of sympathetic and embryonic sensory neurons as well as basal forebrain cholinergic neurons in the brain. Its relevance in the snake venom is not clear. However, it has been shown to inhibit metalloproteinase-dependent proteolysis of platelet glycoprotein Ib alpha, suggesting a metalloproteinase inhibition to prevent metalloprotease autodigestion and/or protection against prey proteases. Binds a lipid between the two protein chains in the homodimer. The lipid-bound form promotes histamine relase from mouse mast cells, contrary to the lipid-free form. The protein is Venom nerve growth factor 2 of Demansia vestigiata (Lesser black whip snake).